The primary structure comprises 371 residues: Tetraacyldisaccharide 4'-kinase (371 aa).

Position 63 to 70 (63 to 70 (AVGGAGKT)) interacts with ATP.

The protein belongs to the LpxK family.

The catalysed reaction is a lipid A disaccharide + ATP = a lipid IVA + ADP + H(+). It participates in glycolipid biosynthesis; lipid IV(A) biosynthesis; lipid IV(A) from (3R)-3-hydroxytetradecanoyl-[acyl-carrier-protein] and UDP-N-acetyl-alpha-D-glucosamine: step 6/6. In terms of biological role, transfers the gamma-phosphate of ATP to the 4'-position of a tetraacyldisaccharide 1-phosphate intermediate (termed DS-1-P) to form tetraacyldisaccharide 1,4'-bis-phosphate (lipid IVA). The protein is Tetraacyldisaccharide 4'-kinase of Anaeromyxobacter sp. (strain Fw109-5).